Consider the following 696-residue polypeptide: Verrucotoxin subunit beta (696 aa).

In terms of domain architecture, B30.2/SPRY spans 506–696 (HMPGVETIKD…GCTTESQWSN (191 aa)).

It belongs to the SNTX/VTX toxin family. In terms of assembly, tetramer composed of 2 alpha and 2 beta subunits. Glycosylated. In terms of tissue distribution, expressed by the venom gland.

The protein resides in the secreted. Functionally, this lethal (towards mice) toxin induces hemolytic, cytolytic and hypotensive activities. Inhibits calcium channels and may activate ATP-sensitive potassium channels in frog atrial heart muscle. In guinea-pig ventricular myocytes, it modulates calcium channel activity through the beta-adrenoceptor-cAMP-PKA pathway (ADRB). This Synanceia verrucosa (Reef stonefish) protein is Verrucotoxin subunit beta.